Reading from the N-terminus, the 214-residue chain is 3,4-dihydroxy-2-butanone 4-phosphate synthase (214 aa).

Residues 37-38 (RE), aspartate 42, 150-154 (RRGHT), and glutamate 174 contribute to the D-ribulose 5-phosphate site. Glutamate 38 is a binding site for Mg(2+). Residue histidine 153 coordinates Mg(2+).

The protein belongs to the DHBP synthase family. As to quaternary structure, homodimer. Requires Mg(2+) as cofactor. Mn(2+) is required as a cofactor.

The catalysed reaction is D-ribulose 5-phosphate = (2S)-2-hydroxy-3-oxobutyl phosphate + formate + H(+). It participates in cofactor biosynthesis; riboflavin biosynthesis; 2-hydroxy-3-oxobutyl phosphate from D-ribulose 5-phosphate: step 1/1. Catalyzes the conversion of D-ribulose 5-phosphate to formate and 3,4-dihydroxy-2-butanone 4-phosphate. In Pasteurella multocida (strain Pm70), this protein is 3,4-dihydroxy-2-butanone 4-phosphate synthase.